Reading from the N-terminus, the 131-residue chain is Small ribosomal subunit protein uS8 (131 aa).

It belongs to the universal ribosomal protein uS8 family. As to quaternary structure, part of the 30S ribosomal subunit. Contacts proteins S5 and S12.

Functionally, one of the primary rRNA binding proteins, it binds directly to 16S rRNA central domain where it helps coordinate assembly of the platform of the 30S subunit. This Leptothrix cholodnii (strain ATCC 51168 / LMG 8142 / SP-6) (Leptothrix discophora (strain SP-6)) protein is Small ribosomal subunit protein uS8.